A 151-amino-acid chain; its full sequence is 6,7-dimethyl-8-ribityllumazine synthase (151 aa).

5-amino-6-(D-ribitylamino)uracil is bound by residues Phe15, 47–49 (TFE), and 71–73 (AVI). Residue 76–77 (ET) participates in (2S)-2-hydroxy-3-oxobutyl phosphate binding. The active-site Proton donor is the His79. Leu104 is a binding site for 5-amino-6-(D-ribitylamino)uracil. Arg119 contributes to the (2S)-2-hydroxy-3-oxobutyl phosphate binding site.

Belongs to the DMRL synthase family.

It carries out the reaction (2S)-2-hydroxy-3-oxobutyl phosphate + 5-amino-6-(D-ribitylamino)uracil = 6,7-dimethyl-8-(1-D-ribityl)lumazine + phosphate + 2 H2O + H(+). The protein operates within cofactor biosynthesis; riboflavin biosynthesis; riboflavin from 2-hydroxy-3-oxobutyl phosphate and 5-amino-6-(D-ribitylamino)uracil: step 1/2. In terms of biological role, catalyzes the formation of 6,7-dimethyl-8-ribityllumazine by condensation of 5-amino-6-(D-ribitylamino)uracil with 3,4-dihydroxy-2-butanone 4-phosphate. This is the penultimate step in the biosynthesis of riboflavin. This chain is 6,7-dimethyl-8-ribityllumazine synthase, found in Metallosphaera sedula (strain ATCC 51363 / DSM 5348 / JCM 9185 / NBRC 15509 / TH2).